Consider the following 441-residue polypeptide: MTFSIEKLVDLKRKKWQSKLQNTKKQVLGRCLTNFSRLLSFRKKQETNGKSPRCSKATLAVVVHPTASTTHDDFLRKKQERSGKSPSCSETTLAVELPDVLVEEILQRLPVKYLVRLKSISKGWKSLIESDHLAEKHLRLLEKKYGLKEIKITVERSTSKSICIKFFSRRSGMNAINSDSDDLLRVPGSCNGLVCVYELDSVYIYLLNPMTGVTRTLTPPRGTKLSVGFGIDVVTGTYKVMVLYGFDRVGTVVFDLDTNKWRQRYKTAGPMPLSCIPTPERNPVFVNGSLFWLLASDFSEILVMDLHTEKFRTLSQPNDMDDVDVSSGYIYMWSLEDRLCVSNVRQGLHSYVWVLVQDELSEKWERTRFNLLGHVFPPLSLNSAWFSQTLVSPYQLSSSTCIGSRQRQNSTSALFSRNGDTGAMDAPIELHISVSTPMMPL.

An F-box domain is found at 91 to 137; that stretch reads TTLAVELPDVLVEEILQRLPVKYLVRLKSISKGWKSLIESDHLAEKH.

The polypeptide is Putative F-box protein At1g33530 (Arabidopsis thaliana (Mouse-ear cress)).